We begin with the raw amino-acid sequence, 250 residues long: Kv channel-interacting protein 4 (250 aa).

Residues 2–44 (NVRRVESISAQLEEASSTGGFLYTQNSTKRSIKERLMKLLPCS) are KIS. A phosphoserine mark is found at S17 and S56. The EF-hand 1; degenerate domain occupies 61-117 (LEMATVRHRPEALELLEAQSKFTKKELQILYRGFKNECPSGVVNEDTFKEIYSQFFP). 3 consecutive EF-hand domains span residues 120–155 (DSTT…LLRG), 156–191 (TVQE…IYDM), and 204–239 (APRQ…DENI). Ca(2+) contacts are provided by D133, D135, N137, D144, D169, N171, D173, Y175, E180, D217, N219, D221, and E228. Residues 237–250 (ENIMRSMQLFENVI) form an interaction with KCND2 region.

This sequence belongs to the recoverin family. In terms of assembly, component of heteromultimeric potassium channels. Identified in potassium channel complexes containing KCND1, KCND2, KCND3, KCNIP1, KCNIP2, KCNIP3, KCNIP4, DPP6 and DPP10. Interacts with KCND2. Interacts with KCND3. Interacts with the C-terminus of PSEN2 and probably PSEN1.

The protein localises to the cell membrane. The protein resides in the cytoplasm. It localises to the peroxisome. Regulatory subunit of Kv4/D (Shal)-type voltage-gated rapidly inactivating A-type potassium channels. Modulates KCND2 channel density, inactivation kinetics and rate of recovery from inactivation in a calcium-dependent and isoform-specific manner. Modulates KCND3/Kv4.3 currents. Isoform 4 does not increase KCND2 expression at the cell membrane. Isoform 4 retains KCND3 in the endoplasmic reticulum and negatively regulates its expression at the cell membrane. The sequence is that of Kv channel-interacting protein 4 (KCNIP4) from Bos taurus (Bovine).